Consider the following 498-residue polypeptide: Type VI secretion system sheath protein TssC1 (498 aa).

Forms a heterodimer with TssB1. Heterodimers assemble to form the sheath of the T6SS machinery. Interacts with TssA1.

Core component of the H1 type VI (H1-T6SS) secretion system that plays a role in the release of toxins targeting both eukaryotic and prokaryotic species. Forms the sheath of the structure by assembling into tubules together with TssB1 resulting in the stacking of cogwheel-like structures showing predominantly a 12-fold symmetry. The sheath contracts to provide the energy needed for effector delivery. In Pseudomonas aeruginosa (strain ATCC 15692 / DSM 22644 / CIP 104116 / JCM 14847 / LMG 12228 / 1C / PRS 101 / PAO1), this protein is Type VI secretion system sheath protein TssC1.